We begin with the raw amino-acid sequence, 182 residues long: Ribosome maturation factor RimM (182 aa).

The region spanning 103–182 is the PRC barrel domain; that stretch reads EDEFYWRELF…RIEVDWDPGF (80 aa).

The protein belongs to the RimM family. Binds ribosomal protein uS19.

The protein localises to the cytoplasm. Functionally, an accessory protein needed during the final step in the assembly of 30S ribosomal subunit, possibly for assembly of the head region. Essential for efficient processing of 16S rRNA. May be needed both before and after RbfA during the maturation of 16S rRNA. It has affinity for free ribosomal 30S subunits but not for 70S ribosomes. This chain is Ribosome maturation factor RimM, found in Vibrio campbellii (strain ATCC BAA-1116).